A 187-amino-acid polypeptide reads, in one-letter code: Threonylcarbamoyl-AMP synthase (187 aa).

The region spanning 4–187 (ILTLDNAVAT…DARSGQILRD (184 aa)) is the YrdC-like domain.

This sequence belongs to the SUA5 family. TsaC subfamily.

The protein localises to the cytoplasm. The enzyme catalyses L-threonine + hydrogencarbonate + ATP = L-threonylcarbamoyladenylate + diphosphate + H2O. In terms of biological role, required for the formation of a threonylcarbamoyl group on adenosine at position 37 (t(6)A37) in tRNAs that read codons beginning with adenine. Catalyzes the conversion of L-threonine, HCO(3)(-)/CO(2) and ATP to give threonylcarbamoyl-AMP (TC-AMP) as the acyladenylate intermediate, with the release of diphosphate. This chain is Threonylcarbamoyl-AMP synthase, found in Xanthomonas oryzae pv. oryzae (strain MAFF 311018).